Reading from the N-terminus, the 500-residue chain is Small ribosomal subunit protein uS3m (500 aa).

Belongs to the universal ribosomal protein uS3 family.

It is found in the mitochondrion. The protein is Small ribosomal subunit protein uS3m (RPS3) of Prototheca wickerhamii.